The primary structure comprises 711 residues: Putative DNA topoisomerase 3 (711 aa).

In terms of domain architecture, Toprim spans 2-135; the sequence is KYLILAEKPS…LRRLWISSVT (134 aa). Residues Glu-8 and Asp-104 each contribute to the Mg(2+) site. Residues 152-580 enclose the Topo IA-type catalytic domain; that stretch reads YNDLYYAALA…EMKGFTKDVV (429 aa). The interaction with DNA stretch occupies residues 186–191; the sequence is SLGRVQ. Tyr-305 functions as the O-(5'-phospho-DNA)-tyrosine intermediate in the catalytic mechanism. The interval 691–711 is disordered; sequence MNKNEGLDNNPFKDALKNLNL.

Belongs to the type IA topoisomerase family. Mg(2+) is required as a cofactor.

It catalyses the reaction ATP-independent breakage of single-stranded DNA, followed by passage and rejoining.. In terms of biological role, releases the supercoiling and torsional tension of DNA, which is introduced during the DNA replication and transcription, by transiently cleaving and rejoining one strand of the DNA duplex. Introduces a single-strand break via transesterification at a target site in duplex DNA. The scissile phosphodiester is attacked by the catalytic tyrosine of the enzyme, resulting in the formation of a DNA-(5'-phosphotyrosyl)-enzyme intermediate and the expulsion of a 3'-OH DNA strand. The free DNA strand then undergoes passage around the unbroken strand, thus removing DNA supercoils. Finally, in the religation step, the DNA 3'-OH attacks the covalent intermediate to expel the active-site tyrosine and restore the DNA phosphodiester backbone. This Staphylococcus aureus (strain bovine RF122 / ET3-1) protein is Putative DNA topoisomerase 3.